The chain runs to 355 residues: Aminopeptidase N (355 aa).

Residues E156 and 290 to 294 each bind substrate; that span reads GAMEN. Residue H326 participates in Zn(2+) binding. E327 (proton acceptor) is an active-site residue. Positions 330 and 349 each coordinate Zn(2+). E349 is a binding site for substrate.

The protein belongs to the peptidase M1 family. Requires Zn(2+) as cofactor.

It localises to the cytoplasm. The enzyme catalyses Release of an N-terminal amino acid, Xaa-|-Yaa- from a peptide, amide or arylamide. Xaa is preferably Ala, but may be most amino acids including Pro (slow action). When a terminal hydrophobic residue is followed by a prolyl residue, the two may be released as an intact Xaa-Pro dipeptide.. In terms of biological role, aminopeptidase N is involved in the degradation of intracellular peptides generated by protein breakdown during normal growth as well as in response to nutrient starvation. This chain is Aminopeptidase N (pepN), found in Acetobacter pasteurianus (Acetobacter turbidans).